The primary structure comprises 238 residues: 2-C-methyl-D-erythritol 4-phosphate cytidylyltransferase (238 aa).

The protein belongs to the IspD/TarI cytidylyltransferase family. IspD subfamily.

The catalysed reaction is 2-C-methyl-D-erythritol 4-phosphate + CTP + H(+) = 4-CDP-2-C-methyl-D-erythritol + diphosphate. The protein operates within isoprenoid biosynthesis; isopentenyl diphosphate biosynthesis via DXP pathway; isopentenyl diphosphate from 1-deoxy-D-xylulose 5-phosphate: step 2/6. Functionally, catalyzes the formation of 4-diphosphocytidyl-2-C-methyl-D-erythritol from CTP and 2-C-methyl-D-erythritol 4-phosphate (MEP). The chain is 2-C-methyl-D-erythritol 4-phosphate cytidylyltransferase from Acinetobacter baumannii (strain ACICU).